The sequence spans 412 residues: Probable inactive allantoicase (412 aa).

The protein belongs to the allantoicase family.

The function of this enzyme is unclear as allantoicase activity is not known to exist in mammals. In Bos taurus (Bovine), this protein is Probable inactive allantoicase (ALLC).